The following is a 546-amino-acid chain: Chaperonin GroEL (546 aa).

Residues threonine 30–proline 33, lysine 51, aspartate 87–threonine 91, glycine 415, asparagine 479–alanine 481, and aspartate 495 contribute to the ATP site. Residues lysine 526–phenylalanine 546 are disordered. The span at alanine 534–phenylalanine 546 shows a compositional bias: gly residues.

The protein belongs to the chaperonin (HSP60) family. As to quaternary structure, forms a cylinder of 14 subunits composed of two heptameric rings stacked back-to-back. Interacts with the co-chaperonin GroES.

The protein localises to the cytoplasm. It carries out the reaction ATP + H2O + a folded polypeptide = ADP + phosphate + an unfolded polypeptide.. Its function is as follows. Together with its co-chaperonin GroES, plays an essential role in assisting protein folding. The GroEL-GroES system forms a nano-cage that allows encapsulation of the non-native substrate proteins and provides a physical environment optimized to promote and accelerate protein folding. The polypeptide is Chaperonin GroEL (Xanthomonas oryzae pv. oryzae (strain MAFF 311018)).